A 156-amino-acid chain; its full sequence is Small ribosomal subunit protein uS7 (156 aa).

Belongs to the universal ribosomal protein uS7 family. As to quaternary structure, part of the 30S ribosomal subunit. Contacts proteins S9 and S11.

Functionally, one of the primary rRNA binding proteins, it binds directly to 16S rRNA where it nucleates assembly of the head domain of the 30S subunit. Is located at the subunit interface close to the decoding center, probably blocks exit of the E-site tRNA. The polypeptide is Small ribosomal subunit protein uS7 (Rhodospirillum rubrum (strain ATCC 11170 / ATH 1.1.1 / DSM 467 / LMG 4362 / NCIMB 8255 / S1)).